Consider the following 180-residue polypeptide: MSYSVSAAQLWSRKLAMQAEDMQQHQKSQSNQIASCLAEMNTKQEVVNQTIGQLGRSISEVQQQNSQLVLQSLNQINMSMQQVALGIQDYASRINKLEQTMSDMNLKFEALQKEQNSNTKTLADCTSQMTIITKKLDAELKKRYMTTKQTRTVQNQTMPRSNTTTKKRVLAIDFLADDDY.

As to quaternary structure, homomer. Interacts (via C-terminus) with hop1 (via C-terminus); the interaction is direct. Interacts (via C-terminus) with rec10; the interaction is direct. Interacts with mde2; the interaction is direct.

It is found in the nucleus. The protein localises to the chromosome. In terms of biological role, required during the early stages of meiosis for meiotic recombination. In Schizosaccharomyces pombe (strain 972 / ATCC 24843) (Fission yeast), this protein is Meiotic recombination protein rec15.